The primary structure comprises 54 residues: Large ribosomal subunit protein bL33 (54 aa).

This sequence belongs to the bacterial ribosomal protein bL33 family.

The chain is Large ribosomal subunit protein bL33 from Frankia alni (strain DSM 45986 / CECT 9034 / ACN14a).